A 75-amino-acid chain; its full sequence is Small ribosomal subunit protein bS18 (75 aa).

Belongs to the bacterial ribosomal protein bS18 family. In terms of assembly, part of the 30S ribosomal subunit. Forms a tight heterodimer with protein bS6.

Functionally, binds as a heterodimer with protein bS6 to the central domain of the 16S rRNA, where it helps stabilize the platform of the 30S subunit. This chain is Small ribosomal subunit protein bS18, found in Histophilus somni (strain 129Pt) (Haemophilus somnus).